Reading from the N-terminus, the 134-residue chain is UPF0357 protein AAL017W (134 aa).

The signal sequence occupies residues 1-23; that stretch reads MFGLISLWHLFWLAVMAGILVVA.

Belongs to the UPF0357 family.

The polypeptide is UPF0357 protein AAL017W (Eremothecium gossypii (strain ATCC 10895 / CBS 109.51 / FGSC 9923 / NRRL Y-1056) (Yeast)).